Reading from the N-terminus, the 347-residue chain is Protein RecA (347 aa).

80–87 (GPESSGKT) lines the ATP pocket.

This sequence belongs to the RecA family.

It localises to the cytoplasm. In terms of biological role, can catalyze the hydrolysis of ATP in the presence of single-stranded DNA, the ATP-dependent uptake of single-stranded DNA by duplex DNA, and the ATP-dependent hybridization of homologous single-stranded DNAs. It interacts with LexA causing its activation and leading to its autocatalytic cleavage. This Chlorobaculum parvum (strain DSM 263 / NCIMB 8327) (Chlorobium vibrioforme subsp. thiosulfatophilum) protein is Protein RecA.